A 142-amino-acid chain; its full sequence is Snaclec GPIB-binding protein subunit alpha (142 aa).

3 cysteine pairs are disulfide-bonded: C6-C17, C39-C136, and C111-C128. In terms of domain architecture, C-type lectin spans 13 to 137 (HRQYCYKFFQ…CVEGNPFVCK (125 aa)).

This sequence belongs to the snaclec family. Heterodimer of subunits alpha and beta; disulfide-linked. As to expression, expressed by the venom gland.

It localises to the secreted. Its function is as follows. Binds to platelet GPIb (subunit alpha) (GP1BA) and functions as a receptor blocker for vWF binding to GPIb. The platelet GPIb-binding site resides on the GPIB-BP subunit beta and not on the alpha subunit. At a final concentration of 104 nM totally abolishes vWF-dependent shear-induced platelet aggregation (SIPA) at a high shear stress, but had no effect on SIPA at a low shear stress. In Bothrops jararaca (Jararaca), this protein is Snaclec GPIB-binding protein subunit alpha.